We begin with the raw amino-acid sequence, 306 residues long: GTPase IMAP family member 1 (306 aa).

The segment at 1–21 (MGGRKMATDEENVYGLEENAQ) is disordered. The Cytoplasmic portion of the chain corresponds to 1-272 (MGGRKMATDE…RLWKWLKSPR (272 aa)). The AIG1-type G domain occupies 25-229 (ESTRRLILVG…YSNEVYELAQ (205 aa)). The segment at 34-41 (GRTGAGKS) is G1. Residues 34–42 (GRTGAGKSA) and Ser55 each bind GTP. Residues 61–65 (SVTRA) are G2. The tract at residues 82–85 (DTPD) is G3. The segment at 152-155 (TRKE) is G4. Residues 153 to 155 (RKE) and Asn190 contribute to the GTP site. The G5 stretch occupies residues 189–191 (DNR). The helical; Anchor for type IV membrane protein transmembrane segment at 273–292 (SWRLGLALLLGGALLFWVLL) threads the bilayer. Residues 293 to 306 (HRRWSEAVAEVGPD) lie on the Lumenal side of the membrane.

This sequence belongs to the TRAFAC class TrmE-Era-EngA-EngB-Septin-like GTPase superfamily. AIG1/Toc34/Toc159-like paraseptin GTPase family. IAN subfamily. In terms of tissue distribution, predominantly expressed in the spleen and to a lesser extent in the lymph nodes. Detected in T-cells.

It localises to the endoplasmic reticulum membrane. It is found in the golgi apparatus membrane. May regulate lymphocyte survival. Required for normal levels of mature T-lymphocytes and mature B-cells. The chain is GTPase IMAP family member 1 (GIMAP1) from Homo sapiens (Human).